The chain runs to 625 residues: Glyco-Gag protein (625 aa).

The Cytoplasmic portion of the chain corresponds to 1 to 66; it reads LGDVSEASGA…SVFRRNRAAR (66 aa). The chain crosses the membrane as a helical span at residues 67 to 86; the sequence is LVCLSIVLSFVCSLLFWTAS. Residues 87 to 625 lie on the Extracellular side of the membrane; it reads KNMGQTVTTP…PQTSLLTLDD (539 aa). An N-linked (GlcNAc...) asparagine; by host glycan is attached at N113. The interval 195 to 305 is disordered; it reads PSPTAPILPS…STTSRAFPLR (111 aa). N479 carries N-linked (GlcNAc...) asparagine; by host glycosylation. Composition is skewed to basic and acidic residues over residues 522-553 and 573-606; these read ETPE…EKER and RQDR…DCPK. The interval 522–625 is disordered; sequence ETPEEREERV…PQTSLLTLDD (104 aa).

In terms of processing, glycosylated by host. Cleaved by host near the middle of the molecule, releasing the c-terminal half containing capsid and nucleoprotein domains op GAG.

It localises to the host cell membrane. Functionally, plays a role in viral particle release. Presumably acts by facilitating the fission of the virion bud at the cell surface. May prevent the antiviral activity of murine APOBEC3. This chain is Glyco-Gag protein, found in AKV murine leukemia virus (AKR (endogenous) murine leukemia virus).